A 400-amino-acid chain; its full sequence is Ribosomal RNA large subunit methyltransferase I (400 aa).

The PUA domain occupies 6 to 84; that stretch reads FPRLVLAKGR…NEAIDSAFFE (79 aa).

It belongs to the methyltransferase superfamily. RlmI family.

It is found in the cytoplasm. It catalyses the reaction cytidine(1962) in 23S rRNA + S-adenosyl-L-methionine = 5-methylcytidine(1962) in 23S rRNA + S-adenosyl-L-homocysteine + H(+). Specifically methylates the cytosine at position 1962 (m5C1962) of 23S rRNA. The protein is Ribosomal RNA large subunit methyltransferase I of Klebsiella pneumoniae subsp. pneumoniae (strain ATCC 700721 / MGH 78578).